A 709-amino-acid polypeptide reads, in one-letter code: Elongation factor G (709 aa).

Residues 9–296 (AKVRNIGIMA…AVVRYLPSPL (288 aa)) form the tr-type G domain. GTP is bound by residues 18–25 (AHIDAGKT), 86–90 (DTPGH), and 140–143 (NKLD).

Belongs to the TRAFAC class translation factor GTPase superfamily. Classic translation factor GTPase family. EF-G/EF-2 subfamily.

It localises to the cytoplasm. Functionally, catalyzes the GTP-dependent ribosomal translocation step during translation elongation. During this step, the ribosome changes from the pre-translocational (PRE) to the post-translocational (POST) state as the newly formed A-site-bound peptidyl-tRNA and P-site-bound deacylated tRNA move to the P and E sites, respectively. Catalyzes the coordinated movement of the two tRNA molecules, the mRNA and conformational changes in the ribosome. The sequence is that of Elongation factor G from Streptomyces griseus subsp. griseus (strain JCM 4626 / CBS 651.72 / NBRC 13350 / KCC S-0626 / ISP 5235).